The following is a 106-amino-acid chain: Large ribosomal subunit protein uL24 (106 aa).

It belongs to the universal ribosomal protein uL24 family. Part of the 50S ribosomal subunit.

One of two assembly initiator proteins, it binds directly to the 5'-end of the 23S rRNA, where it nucleates assembly of the 50S subunit. Functionally, one of the proteins that surrounds the polypeptide exit tunnel on the outside of the subunit. The sequence is that of Large ribosomal subunit protein uL24 from Marinobacter nauticus (strain ATCC 700491 / DSM 11845 / VT8) (Marinobacter aquaeolei).